Here is a 365-residue protein sequence, read N- to C-terminus: MTNVSDEKRILIMAGGTGGHVFPALAVAKYLSKQGWKVRWLGTAERMEARLVPQHGFDIDFIDIKGVRGNGVVRKLAAPFKVLRSITQARVVIKEFQPDVVLGMGGFASGPGGVAARLSGIPLVLHEQNAIPGMTNKILSRIASQVLCAFEDTFDQVQAEVVGNPIREELIALGQTPKDAGAKESLKVLVVGGSLGAKVFNDLMPTVTADMSKTHLITVWHQVGKGNLQSVKGEYQRLGLDGSVSVAEFIDDMEAAYRWADVVLCRSGALTVSELAAIGLPSLLVPYPHAVDDHQTKNAQVLVKAGGAFLLPQPILDIDKLIGKLQILSSDRDELDQMGQRAKSVGVIDATQKVADVCIRLAGKS.

UDP-N-acetyl-alpha-D-glucosamine-binding positions include 17–19 (TGG), N129, R167, S194, I250, 269–274 (ALTVSE), and Q295.

The protein belongs to the glycosyltransferase 28 family. MurG subfamily.

The protein localises to the cell inner membrane. The enzyme catalyses di-trans,octa-cis-undecaprenyl diphospho-N-acetyl-alpha-D-muramoyl-L-alanyl-D-glutamyl-meso-2,6-diaminopimeloyl-D-alanyl-D-alanine + UDP-N-acetyl-alpha-D-glucosamine = di-trans,octa-cis-undecaprenyl diphospho-[N-acetyl-alpha-D-glucosaminyl-(1-&gt;4)]-N-acetyl-alpha-D-muramoyl-L-alanyl-D-glutamyl-meso-2,6-diaminopimeloyl-D-alanyl-D-alanine + UDP + H(+). It participates in cell wall biogenesis; peptidoglycan biosynthesis. Functionally, cell wall formation. Catalyzes the transfer of a GlcNAc subunit on undecaprenyl-pyrophosphoryl-MurNAc-pentapeptide (lipid intermediate I) to form undecaprenyl-pyrophosphoryl-MurNAc-(pentapeptide)GlcNAc (lipid intermediate II). The chain is UDP-N-acetylglucosamine--N-acetylmuramyl-(pentapeptide) pyrophosphoryl-undecaprenol N-acetylglucosamine transferase from Shewanella woodyi (strain ATCC 51908 / MS32).